The following is a 369-amino-acid chain: 5-amino-6-(D-ribitylamino)uracil--L-tyrosine 4-hydroxyphenyl transferase (369 aa).

The region spanning 56-292 (VTFVVNRNIN…AVARLYFGPL (237 aa)) is the Radical SAM core domain. 3 residues coordinate [4Fe-4S] cluster: C70, C74, and C77.

It belongs to the radical SAM superfamily. CofH family. As to quaternary structure, consists of two subunits, CofG and CofH. [4Fe-4S] cluster is required as a cofactor.

The catalysed reaction is 5-amino-6-(D-ribitylamino)uracil + L-tyrosine + S-adenosyl-L-methionine = 5-amino-5-(4-hydroxybenzyl)-6-(D-ribitylimino)-5,6-dihydrouracil + 2-iminoacetate + 5'-deoxyadenosine + L-methionine + H(+). It participates in cofactor biosynthesis; coenzyme F0 biosynthesis. Its function is as follows. Catalyzes the radical-mediated synthesis of 5-amino-5-(4-hydroxybenzyl)-6-(D-ribitylimino)-5,6-dihydrouracil from 5-amino-6-(D-ribitylamino)uracil and L-tyrosine. This is 5-amino-6-(D-ribitylamino)uracil--L-tyrosine 4-hydroxyphenyl transferase from Methanopyrus kandleri (strain AV19 / DSM 6324 / JCM 9639 / NBRC 100938).